The primary structure comprises 372 residues: Queuine tRNA-ribosyltransferase (372 aa).

The active-site Proton acceptor is the Asp-92. Residues Asp-92–Tyr-96, Asp-146, Gln-188, and Gly-215 each bind substrate. The segment at Gly-246–Glu-252 is RNA binding. The Nucleophile role is filled by Asp-265. An RNA binding; important for wobble base 34 recognition region spans residues Thr-270–Arg-274. Zn(2+) contacts are provided by Cys-303, Cys-305, Cys-308, and His-334.

It belongs to the queuine tRNA-ribosyltransferase family. Homodimer. Within each dimer, one monomer is responsible for RNA recognition and catalysis, while the other monomer binds to the replacement base PreQ1. Zn(2+) is required as a cofactor.

The catalysed reaction is 7-aminomethyl-7-carbaguanine + guanosine(34) in tRNA = 7-aminomethyl-7-carbaguanosine(34) in tRNA + guanine. Its pathway is tRNA modification; tRNA-queuosine biosynthesis. Catalyzes the base-exchange of a guanine (G) residue with the queuine precursor 7-aminomethyl-7-deazaguanine (PreQ1) at position 34 (anticodon wobble position) in tRNAs with GU(N) anticodons (tRNA-Asp, -Asn, -His and -Tyr). Catalysis occurs through a double-displacement mechanism. The nucleophile active site attacks the C1' of nucleotide 34 to detach the guanine base from the RNA, forming a covalent enzyme-RNA intermediate. The proton acceptor active site deprotonates the incoming PreQ1, allowing a nucleophilic attack on the C1' of the ribose to form the product. After dissociation, two additional enzymatic reactions on the tRNA convert PreQ1 to queuine (Q), resulting in the hypermodified nucleoside queuosine (7-(((4,5-cis-dihydroxy-2-cyclopenten-1-yl)amino)methyl)-7-deazaguanosine). This is Queuine tRNA-ribosyltransferase from Prochlorococcus marinus (strain SARG / CCMP1375 / SS120).